Reading from the N-terminus, the 108-residue chain is Large ribosomal subunit protein uL22 (108 aa).

The protein belongs to the universal ribosomal protein uL22 family. Part of the 50S ribosomal subunit.

Its function is as follows. This protein binds specifically to 23S rRNA; its binding is stimulated by other ribosomal proteins, e.g. L4, L17, and L20. It is important during the early stages of 50S assembly. It makes multiple contacts with different domains of the 23S rRNA in the assembled 50S subunit and ribosome. Functionally, the globular domain of the protein is located near the polypeptide exit tunnel on the outside of the subunit, while an extended beta-hairpin is found that lines the wall of the exit tunnel in the center of the 70S ribosome. This Desulfatibacillum aliphaticivorans protein is Large ribosomal subunit protein uL22.